We begin with the raw amino-acid sequence, 134 residues long: Small ribosomal subunit protein uS8c (134 aa).

Belongs to the universal ribosomal protein uS8 family. As to quaternary structure, part of the 30S ribosomal subunit.

It is found in the plastid. The protein resides in the chloroplast. One of the primary rRNA binding proteins, it binds directly to 16S rRNA central domain where it helps coordinate assembly of the platform of the 30S subunit. The sequence is that of Small ribosomal subunit protein uS8c (rps8) from Vitis vinifera (Grape).